The following is a 142-amino-acid chain: Large ribosomal subunit protein uL11 (142 aa).

The protein belongs to the universal ribosomal protein uL11 family. Part of the ribosomal stalk of the 50S ribosomal subunit. Interacts with L10 and the large rRNA to form the base of the stalk. L10 forms an elongated spine to which L12 dimers bind in a sequential fashion forming a multimeric L10(L12)X complex. One or more lysine residues are methylated.

Its function is as follows. Forms part of the ribosomal stalk which helps the ribosome interact with GTP-bound translation factors. The polypeptide is Large ribosomal subunit protein uL11 (Parvibaculum lavamentivorans (strain DS-1 / DSM 13023 / NCIMB 13966)).